The sequence spans 397 residues: Trans-2-enoyl-CoA reductase [NADH] (397 aa).

NAD(+) is bound by residues 53 to 58 (GCSNGY), 79 to 80 (FE), 116 to 117 (DA), and 144 to 145 (LA). A substrate-binding site is contributed by Tyr-230. Tyr-240 acts as the Proton donor in catalysis. Residues Lys-249 and 276–278 (LVT) contribute to the NAD(+) site.

It belongs to the TER reductase family. Monomer.

It catalyses the reaction a 2,3-saturated acyl-CoA + NAD(+) = a (2E)-enoyl-CoA + NADH + H(+). It functions in the pathway lipid metabolism; fatty acid biosynthesis. Its activity is regulated as follows. Inhibited by lauroyl-CoA. Its function is as follows. Involved in the fatty acid synthesis (FAS II). Catalyzes the reduction of the carbon-carbon double bond of crotonyl-CoA to yield butyryl-CoA. In vitro it can also use hexenoyl-CoA and dodecenoyl-CoA as substrates. The chain is Trans-2-enoyl-CoA reductase [NADH] from Treponema denticola (strain ATCC 35405 / DSM 14222 / CIP 103919 / JCM 8153 / KCTC 15104).